The following is a 122-amino-acid chain: Small ribosomal subunit protein uS13 (122 aa).

Residues 93–122 are disordered; sequence RRGLPVRGQKTKTNARTRKGPKKTIANKKK.

It belongs to the universal ribosomal protein uS13 family. In terms of assembly, part of the 30S ribosomal subunit. Forms a loose heterodimer with protein S19. Forms two bridges to the 50S subunit in the 70S ribosome.

Its function is as follows. Located at the top of the head of the 30S subunit, it contacts several helices of the 16S rRNA. In the 70S ribosome it contacts the 23S rRNA (bridge B1a) and protein L5 of the 50S subunit (bridge B1b), connecting the 2 subunits; these bridges are implicated in subunit movement. Contacts the tRNAs in the A and P-sites. This Clostridium beijerinckii (strain ATCC 51743 / NCIMB 8052) (Clostridium acetobutylicum) protein is Small ribosomal subunit protein uS13.